A 292-amino-acid chain; its full sequence is ATP synthase gamma chain (292 aa).

It belongs to the ATPase gamma chain family. F-type ATPases have 2 components, CF(1) - the catalytic core - and CF(0) - the membrane proton channel. CF(1) has five subunits: alpha(3), beta(3), gamma(1), delta(1), epsilon(1). CF(0) has three main subunits: a, b and c.

It localises to the cell inner membrane. Its function is as follows. Produces ATP from ADP in the presence of a proton gradient across the membrane. The gamma chain is believed to be important in regulating ATPase activity and the flow of protons through the CF(0) complex. The sequence is that of ATP synthase gamma chain from Nitrobacter hamburgensis (strain DSM 10229 / NCIMB 13809 / X14).